Reading from the N-terminus, the 260-residue chain is Adenosylcobinamide-GDP ribazoletransferase (260 aa).

8 helical membrane passes run 3–23 (APLWLRDLAGAWIFYSVLPAW), 36–56 (FAPWIGLVLGGLQSFLWLVLI), 60–80 (WPTSAVTLLVIGLGAWLSGGL), 108–128 (VGASGVQALLVVVLLQIASLL), 133–153 (LAPLALLIAAFWGRCAPLWAM), 180–200 (ALPACLVLLLALTVVPSLMIV), 206–226 (MVLMAGIGVGVLPAFLVPELL), and 239–259 (GASVVLVETITLLLLAVLLPA).

The protein belongs to the CobS family. The cofactor is Mg(2+).

The protein resides in the cell inner membrane. It catalyses the reaction alpha-ribazole + adenosylcob(III)inamide-GDP = adenosylcob(III)alamin + GMP + H(+). The enzyme catalyses alpha-ribazole 5'-phosphate + adenosylcob(III)inamide-GDP = adenosylcob(III)alamin 5'-phosphate + GMP + H(+). It functions in the pathway cofactor biosynthesis; adenosylcobalamin biosynthesis; adenosylcobalamin from cob(II)yrinate a,c-diamide: step 7/7. Functionally, joins adenosylcobinamide-GDP and alpha-ribazole to generate adenosylcobalamin (Ado-cobalamin). Also synthesizes adenosylcobalamin 5'-phosphate from adenosylcobinamide-GDP and alpha-ribazole 5'-phosphate. This Prochlorococcus marinus (strain MIT 9313) protein is Adenosylcobinamide-GDP ribazoletransferase.